Reading from the N-terminus, the 184-residue chain is Cell division protein ZapC (184 aa).

It belongs to the ZapC family. Interacts directly with FtsZ.

The protein resides in the cytoplasm. Its function is as follows. Contributes to the efficiency of the cell division process by stabilizing the polymeric form of the cell division protein FtsZ. Acts by promoting interactions between FtsZ protofilaments and suppressing the GTPase activity of FtsZ. In Idiomarina loihiensis (strain ATCC BAA-735 / DSM 15497 / L2-TR), this protein is Cell division protein ZapC.